Here is a 728-residue protein sequence, read N- to C-terminus: Ophiobolin F synthase oblA (728 aa).

The segment at 1-322 (MEYKYSTIVD…RYHFPGRWNE (322 aa)) is (7Z)-ophiobola-7,19-dien-3-ol synthase. D93 and D97 together coordinate Mg(2+). Position 93 (D93) interacts with substrate. The short motif at 93–97 (DDEID) is the DDXXD 1 element. Residues 182–185 (RCMD), N226, 230–234 (SYEKE), and 313–314 (RY) each bind substrate. Positions 226–234 (NDLFSYEKE) match the NSE/DTE motif. A geranylfarnesyl diphosphate synthase region spans residues 323–728 (LQKLRAEHGI…LRLMVDMLKV (406 aa)). Residues 362–371 (GINGTNGVNG) are compositionally biased toward low complexity. The disordered stretch occupies residues 362–394 (GINGTNGVNGKRNRDEDGDENDARINGNGFKKP). 3 residues coordinate isopentenyl diphosphate: K439, R442, and H471. Positions 478 and 482 each coordinate Mg(2+). Positions 478–482 (DDIED) match the DDXXD 2 motif. R487 contributes to the dimethylallyl diphosphate binding site. R488 contributes to the isopentenyl diphosphate binding site. Residues K565, T566, Q604, N611, K621, and K631 each coordinate dimethylallyl diphosphate.

It in the N-terminal section; belongs to the terpene synthase family. This sequence in the C-terminal section; belongs to the FPP/GGPP synthase family. Requires Mg(2+) as cofactor.

The catalysed reaction is isopentenyl diphosphate + (2E,6E)-farnesyl diphosphate = (2E,6E,10E)-geranylgeranyl diphosphate + diphosphate. The enzyme catalyses isopentenyl diphosphate + (2E,6E,10E)-geranylgeranyl diphosphate = (2E,6E,10E,14E)-geranylfarnesyl diphosphate + diphosphate. It catalyses the reaction (2E,6E,10E,14E)-geranylfarnesyl diphosphate + H2O = ophiobolin F + diphosphate. It functions in the pathway secondary metabolite biosynthesis; terpenoid biosynthesis. Functionally, bifunctional sesterterpene synthase; part of the gene cluster that mediates the biosynthesis of the sesterterpenes ophiobolins, fungal phytotoxins with potential anti-cancer activities. The first step of the pathway is performed by the sesterterpene synthase oblA that possesses both prenyl transferase and terpene cyclase activity, converting isopentenyl diphosphate and dimethylallyl diphosphate into geranylfarnesyl diphosphate (GFPP) and further converting GFPP into ophiobolin F, respectively. Other sesterterpenoids (C(25) terpenoids) are found as minor products of oblA. The cytochrome P450 monooxygenase oblB then catalyzes a four-step oxidative transformation of ophiobolin F to yield ophiobolin C. The function of the cytochrome P450 monooxygenase oblE has still to be determined. In Emericella variicolor (Aspergillus stellatus), this protein is Ophiobolin F synthase oblA.